Reading from the N-terminus, the 998-residue chain is MAAGRPGTGCGDHPLLRLSGIPADFLERRPAGPGAGAGAGEAAVRRAGLPGRGGGAGQLAALPARRRRRTGRPDTGLPHARARSRPGVFRRAGAARGGGDLLQPPAAGAHPIPRRPRRLSRRAVVRRKLRGGLRPLRRPPRQRRMGFRQPTELRQAGAPAHRLHRPRTTHRHAVRRAPGRRREHPCAARTADGGLPAGGGLAALAAGGEDGRDRPGPAWLSRRRQHPALAGRQRARLSAPRRQPRGRLVSGHGGVLARRLLWRVLLFSLCFTVLAGAVQLFFEYRREMREIEARLELIRSGYLASFERSLWDLNQEQLNVQLRGLGDFPDIARVSLQSADFNLLQGDQRPRGMLRVERFPLSYQPPGGERRQLGELEIAIDLAAVYRRLVSGGLASLLWMGSFLCGLAVALSWLFHSLVTRHLWRMSEFAGHIAEGDLQQPLRLDKVDRERDEIDAVAAALEDMRQALRTDRRRRDADRDELRRQVERRTASLRRAKDQAEAADRAKSRFLATMSHEIRTPLNGILGMAELLREASLGERDRQRLRALATAGEGLLAILNEVLHFARLEEAPDVPEAVDFSLRSLLEDVLTLLEPRARENATRLDLWLDPQVHDGHRGAEQFLRQVLTNLLGNAVKFTEAGEVRVRVERLARSAGSERLRLSVADDGIGIPEEMRERIFERFTQGGDAVTRRYGGTGLGLAISKRLVEALGGRIGVESRVGQGSTFWFEIELALASLSGATPPAASVSALEVLLVEDVALNREVAQGLLERDGHRVMLAEDAGPALALCRQRRFDLILLDMHLPGMAGLELCAGIRRQLDGLNRATPIFAFTASIQPDMVRRYFAAGMQGVLGKPLRMDELRRALGEVGTSVPALAVDAALDRQMLETHRRLLGRHKLAGLLGNLLGSLDEQLPLLAEALDQADLAEAANIAHRLSGSCHSMGLVALGAGLGELEREALGAAGVDPRAWGARLGSLRRDGAEALRRAGFLGEADSAAG.

3 disordered regions span residues 27–82, 154–198, and 224–245; these read ERRP…HARA, RQAG…LPAG, and RQHP…RQPR. Over residues 40 to 49 the composition is skewed to low complexity; sequence GEAAVRRAGL. Residues 161–183 show a composition bias toward basic residues; it reads HRLHRPRTTHRHAVRRAPGRRRE. Transmembrane regions (helical) follow at residues 264–284 and 395–415; these read VLLF…FFEY and ASLL…SWLF. Residues 417-473 enclose the HAMP domain; sequence SLVTRHLWRMSEFAGHIAEGDLQQPLRLDKVDRERDEIDAVAAALEDMRQALRTDRR. Positions 513-734 constitute a Histidine kinase domain; sequence TMSHEIRTPL…TFWFEIELAL (222 aa). Phosphohistidine; by autocatalysis is present on His-516. The 119-residue stretch at 751–869 folds into the Response regulatory domain; sequence EVLLVEDVAL…ELRRALGEVG (119 aa). 4-aspartylphosphate is present on Asp-800. Residues 894 to 987 enclose the HPt domain; it reads GRHKLAGLLG…RDGAEALRRA (94 aa). His-933 carries the phosphohistidine modification.

In terms of processing, autophosphorylated. Activation may require a sequential transfer of a phosphate group from a His in the primary transmitter domain, to an Asp in the receiver domain and to a His in the secondary transmitter domain.

It is found in the cell membrane. The catalysed reaction is ATP + protein L-histidine = ADP + protein N-phospho-L-histidine.. It functions in the pathway amino-acid degradation; L-arginine degradation [regulation]. Its function is as follows. Member of the two-component regulatory system AruS/AruR, which is involved in the regulation of the arginine transaminase (ATA) pathway in response to exogeneous L-arginine. Probably functions as a sensor kinase that phosphorylates AruR. This Pseudomonas aeruginosa (strain ATCC 15692 / DSM 22644 / CIP 104116 / JCM 14847 / LMG 12228 / 1C / PRS 101 / PAO1) protein is Sensor histidine kinase AruS (aruS).